The sequence spans 213 residues: RNA polymerase I subunit H (213 aa).

The segment covering 1–19 has biased composition (basic and acidic residues); that stretch reads MVERMKKDTGDETKTKVQE. Residues 1 to 70 are disordered; the sequence is MVERMKKDTG…AREFTDKPWR (70 aa). Over residues 21–31 the composition is skewed to pro residues; the sequence is PPSPSPPPPPP. Composition is skewed to basic and acidic residues over residues 43–53 and 60–69; these read VPEREKKQIER and HAREFTDKPW.

In terms of tissue distribution, expressed during spermatogenesis, initially at pachytene stage with abundance increasing in round spermatids and decreasing again during spermatid elongation.

In terms of biological role, may be involved in male sterility. The polypeptide is RNA polymerase I subunit H (Mus musculus (Mouse)).